The following is a 274-amino-acid chain: Large ribosomal subunit protein uL2 (274 aa).

Disordered stretches follow at residues 1–23 and 222–242; these read MAIK…SFEE and GSAM…SPIG.

It belongs to the universal ribosomal protein uL2 family. In terms of assembly, part of the 50S ribosomal subunit. Forms a bridge to the 30S subunit in the 70S ribosome.

Functionally, one of the primary rRNA binding proteins. Required for association of the 30S and 50S subunits to form the 70S ribosome, for tRNA binding and peptide bond formation. It has been suggested to have peptidyltransferase activity; this is somewhat controversial. Makes several contacts with the 16S rRNA in the 70S ribosome. This is Large ribosomal subunit protein uL2 from Dehalococcoides mccartyi (strain ATCC BAA-2266 / KCTC 15142 / 195) (Dehalococcoides ethenogenes (strain 195)).